The sequence spans 313 residues: Protein phosphatase PTC7 homolog fig (313 aa).

The PPM-type phosphatase domain occupies 47 to 307 (KEPLTDLQLR…DDITVILASL (261 aa)). Mn(2+) contacts are provided by D83, G84, and D229.

It belongs to the PP2C family. It depends on Mg(2+) as a cofactor. Requires Mn(2+) as cofactor.

The enzyme catalyses O-phospho-L-seryl-[protein] + H2O = L-seryl-[protein] + phosphate. The catalysed reaction is O-phospho-L-threonyl-[protein] + H2O = L-threonyl-[protein] + phosphate. The protein is Protein phosphatase PTC7 homolog fig of Drosophila virilis (Fruit fly).